The following is a 325-amino-acid chain: Tetraacyldisaccharide 4'-kinase (325 aa).

58-65 (TVGGSGKT) contacts ATP.

The protein belongs to the LpxK family.

The enzyme catalyses a lipid A disaccharide + ATP = a lipid IVA + ADP + H(+). It functions in the pathway glycolipid biosynthesis; lipid IV(A) biosynthesis; lipid IV(A) from (3R)-3-hydroxytetradecanoyl-[acyl-carrier-protein] and UDP-N-acetyl-alpha-D-glucosamine: step 6/6. Functionally, transfers the gamma-phosphate of ATP to the 4'-position of a tetraacyldisaccharide 1-phosphate intermediate (termed DS-1-P) to form tetraacyldisaccharide 1,4'-bis-phosphate (lipid IVA). This is Tetraacyldisaccharide 4'-kinase from Coxiella burnetii (strain CbuG_Q212) (Coxiella burnetii (strain Q212)).